The sequence spans 141 residues: VLSPEDKNHVRSTWDKIGGHGAEYGAEALERMFTSFPTTKTYFPHFDVSHGSAQVKAHGKKVADALANAAGHLDDLPGALSALSDLHAHKLRVDPVNFKLLSHCLLVTLANHHPAEFTPGVHASLDKFLASVSTVLTSKYR.

The region spanning 1–141 (VLSPEDKNHV…VSTVLTSKYR (141 aa)) is the Globin domain. Phosphoserine is present on S3. K7 carries the post-translational modification N6-succinyllysine. K16 carries the post-translational modification N6-acetyllysine; alternate. Residue K16 is modified to N6-succinyllysine; alternate. Y24 carries the phosphotyrosine modification. A Phosphoserine modification is found at S35. Position 40 is an N6-succinyllysine (K40). S49 carries the phosphoserine modification. H58 lines the O2 pocket. Heme b is bound at residue H87. At S102 the chain carries Phosphoserine. The residue at position 108 (T108) is a Phosphothreonine. Residues S124 and S131 each carry the phosphoserine modification. Residues T134 and T137 each carry the phosphothreonine modification. A Phosphoserine modification is found at S138.

It belongs to the globin family. Heterotetramer of two alpha chains and two beta chains. In terms of tissue distribution, red blood cells.

Involved in oxygen transport from the lung to the various peripheral tissues. Its function is as follows. Hemopressin acts as an antagonist peptide of the cannabinoid receptor CNR1. Hemopressin-binding efficiently blocks cannabinoid receptor CNR1 and subsequent signaling. The chain is Hemoglobin subunit alpha (HBA) from Spalax ehrenbergi (Middle East blind mole rat).